A 42-amino-acid chain; its full sequence is MKVKGSLKSHRNRDKNCKVVKRGGKVYIINKVKPRCKARQGS.

This sequence belongs to the bacterial ribosomal protein bL36 family.

The chain is Large ribosomal subunit protein bL36 from Wolbachia pipientis subsp. Culex pipiens (strain wPip).